Consider the following 118-residue polypeptide: Bovine agnoprotein (118 aa).

In Bos taurus (Bovine), this protein is Bovine agnoprotein.